A 274-amino-acid chain; its full sequence is Leucyl/phenylalanyl-tRNA--protein transferase (274 aa).

The protein belongs to the L/F-transferase family.

The protein resides in the cytoplasm. It catalyses the reaction N-terminal L-lysyl-[protein] + L-leucyl-tRNA(Leu) = N-terminal L-leucyl-L-lysyl-[protein] + tRNA(Leu) + H(+). The enzyme catalyses N-terminal L-arginyl-[protein] + L-leucyl-tRNA(Leu) = N-terminal L-leucyl-L-arginyl-[protein] + tRNA(Leu) + H(+). The catalysed reaction is L-phenylalanyl-tRNA(Phe) + an N-terminal L-alpha-aminoacyl-[protein] = an N-terminal L-phenylalanyl-L-alpha-aminoacyl-[protein] + tRNA(Phe). Functions in the N-end rule pathway of protein degradation where it conjugates Leu, Phe and, less efficiently, Met from aminoacyl-tRNAs to the N-termini of proteins containing an N-terminal arginine or lysine. This is Leucyl/phenylalanyl-tRNA--protein transferase from Psychrobacter cryohalolentis (strain ATCC BAA-1226 / DSM 17306 / VKM B-2378 / K5).